A 206-amino-acid polypeptide reads, in one-letter code: uncharacterized protein (206 aa).

2 disordered regions span residues 64–123 (NTES…DPSL) and 155–206 (VTTP…SSGG). Polar residues predominate over residues 66–79 (ESTQKTATTQQQGL). The span at 97–107 (AENNAQANQSE) shows a compositional bias: low complexity. Residues 108–118 (NRAESTTKAES) are compositionally biased toward basic and acidic residues. Residues 155 to 167 (VTTPTGQVVQPQT) show a composition bias toward low complexity. Polar residues predominate over residues 182–198 (GSMNSKPVSRGGFSSPN).

This is an uncharacterized protein from Haemophilus influenzae (strain ATCC 51907 / DSM 11121 / KW20 / Rd).